The following is a 198-amino-acid chain: Holliday junction resolvase RecU (198 aa).

The segment at 1–22 (MVNYPHKVSSQKRQTSLSQPKN) is disordered. Positions 11 to 22 (QKRQTSLSQPKN) are enriched in polar residues. 4 residues coordinate Mg(2+): threonine 81, aspartate 83, glutamate 96, and glutamine 115.

The protein belongs to the RecU family. Requires Mg(2+) as cofactor.

The protein resides in the cytoplasm. It catalyses the reaction Endonucleolytic cleavage at a junction such as a reciprocal single-stranded crossover between two homologous DNA duplexes (Holliday junction).. Endonuclease that resolves Holliday junction intermediates in genetic recombination. Cleaves mobile four-strand junctions by introducing symmetrical nicks in paired strands. Promotes annealing of linear ssDNA with homologous dsDNA. Required for DNA repair, homologous recombination and chromosome segregation. The sequence is that of Holliday junction resolvase RecU from Streptococcus pneumoniae serotype 2 (strain D39 / NCTC 7466).